A 364-amino-acid polypeptide reads, in one-letter code: MSKAPKDTKVVIGMSGGVDSSVAALLLKQQGYDVVGIFMKNWDESDELGYCTSAEDYEDVRRVCDQIGIPYYSVNFEKEYWDRVFTYFLNEYKAGRTPNPDVMCNKEIKFKAFLDHAIKLGADYLATGHYAQVDYSDGEYRLLRGVDTNKDQTYFLNQLNQYQLSKAMFPVGHLQKKDLRQIALDAGLATASKKDSTGICFIGERNFKEFLSNYLPAKPGKIISLDGEVKGKHDGLMYYTLGQRKGLGIGGAGTGEPWFVVDKDLEKNILYVTQGETHPSLYSRGLIGADLQWVSENPKPSVIKCTAKFRYRQPDQGVTVYVEEGNTCRVMFDEPQKAITPGQAVVFYDGVVCLGGATIDQILK.

ATP contacts are provided by residues 13–20 (GMSGGVDS) and methionine 39. Positions 99-101 (NPD) are interaction with target base in tRNA. The Nucleophile role is filled by cysteine 104. A disulfide bridge connects residues cysteine 104 and cysteine 200. Position 128 (glycine 128) interacts with ATP. An interaction with tRNA region spans residues 150–152 (KDQ). Residue cysteine 200 is the Cysteine persulfide intermediate of the active site. The interval 310–311 (RY) is interaction with tRNA.

It belongs to the MnmA/TRMU family.

Its subcellular location is the cytoplasm. It carries out the reaction S-sulfanyl-L-cysteinyl-[protein] + uridine(34) in tRNA + AH2 + ATP = 2-thiouridine(34) in tRNA + L-cysteinyl-[protein] + A + AMP + diphosphate + H(+). Its function is as follows. Catalyzes the 2-thiolation of uridine at the wobble position (U34) of tRNA, leading to the formation of s(2)U34. This chain is tRNA-specific 2-thiouridylase MnmA, found in Alkaliphilus oremlandii (strain OhILAs) (Clostridium oremlandii (strain OhILAs)).